We begin with the raw amino-acid sequence, 145 residues long: 3-hydroxyacyl-[acyl-carrier-protein] dehydratase FabZ (145 aa).

Histidine 47 is an active-site residue.

Belongs to the thioester dehydratase family. FabZ subfamily.

It localises to the cytoplasm. The enzyme catalyses a (3R)-hydroxyacyl-[ACP] = a (2E)-enoyl-[ACP] + H2O. Functionally, involved in unsaturated fatty acids biosynthesis. Catalyzes the dehydration of short chain beta-hydroxyacyl-ACPs and long chain saturated and unsaturated beta-hydroxyacyl-ACPs. The chain is 3-hydroxyacyl-[acyl-carrier-protein] dehydratase FabZ from Methylobacillus flagellatus (strain ATCC 51484 / DSM 6875 / VKM B-1610 / KT).